The following is a 419-amino-acid chain: 3-isopropylmalate dehydratase large subunit (419 aa).

Positions 300, 360, and 363 each coordinate [4Fe-4S] cluster.

It belongs to the aconitase/IPM isomerase family. LeuC type 2 subfamily. In terms of assembly, heterodimer of LeuC and LeuD. The cofactor is [4Fe-4S] cluster.

It catalyses the reaction (2R,3S)-3-isopropylmalate = (2S)-2-isopropylmalate. It participates in amino-acid biosynthesis; L-leucine biosynthesis; L-leucine from 3-methyl-2-oxobutanoate: step 2/4. Functionally, catalyzes the isomerization between 2-isopropylmalate and 3-isopropylmalate, via the formation of 2-isopropylmaleate. The sequence is that of 3-isopropylmalate dehydratase large subunit from Clostridium botulinum (strain Eklund 17B / Type B).